We begin with the raw amino-acid sequence, 801 residues long: Phosphatidylinositol 4-kinase beta (801 aa).

Disordered regions lie at residues 1–29, 101–121, and 250–304; these read MGDT…GGSL, EDEM…RRRQ, and RKRE…EDEP. N-acetylglycine is present on G2. The interval 2–68 is interaction with ACBD3; that stretch reads GDTAVEPAPL…VRLLHGAVAV (67 aa). One can recognise a PIK helical domain in the interval 29–242; it reads LLSVITEGVG…GTKLRKLILS (214 aa). At S258 the chain carries Phosphoserine. The segment covering 259–268 has biased composition (polar residues); it reads PALNTGLSPS. T263 is modified (phosphothreonine). S266, S275, S277, S284, S294, and S413 each carry phosphoserine. The segment covering 278–294 has biased composition (low complexity); it reads DATASISLSSSLKRTAS. Position 423 is a phosphothreonine (T423). A Phosphoserine modification is found at S496. A phosphothreonine mark is found at T502 and T504. A PI3K/PI4K catalytic domain is found at 520–786; that stretch reads EPWQEKVRRI…MVDGSMRSIT (267 aa). Positions 526 to 532 are G-loop; the sequence is VRRIREG. Residues 653-661 form a catalytic loop region; sequence QVKDRHNGN. The segment at 672-696 is activation loop; it reads HIDFGFILSSSPRNLGFETSAFKLT.

The protein belongs to the PI3/PI4-kinase family. Type III PI4K subfamily. Interacts with ARF1 and ARF3 in the Golgi complex, but not with ARF4, ARF5 or ARF6. Interacts with NCS1/FREQ in a calcium-independent manner. Interacts with CALN1/CABP8 and CALN2/CABP7; in a calcium-dependent manner; this interaction competes with NCS1/FREQ binding. Interacts with ACBD3. Interacts with ARMH3, YWHAB, YWHAE, YWHAG, YWHAH, YWHAQ, YWHAZ and SFN. Interacts with GGA2 (via VHS domain); the interaction is important for PI4KB location at the Golgi apparatus membrane. Interacts with ATG9A. Mg(2+) serves as cofactor. Requires Mn(2+) as cofactor.

It is found in the endomembrane system. It localises to the mitochondrion outer membrane. The protein localises to the rough endoplasmic reticulum membrane. Its subcellular location is the golgi apparatus. The protein resides in the golgi apparatus membrane. It catalyses the reaction a 1,2-diacyl-sn-glycero-3-phospho-(1D-myo-inositol) + ATP = a 1,2-diacyl-sn-glycero-3-phospho-(1D-myo-inositol 4-phosphate) + ADP + H(+). With respect to regulation, inhibited by wortmannin. Increased kinase activity upon interaction with NCS1/FREQ. Functionally, phosphorylates phosphatidylinositol (PI) in the first committed step in the production of the second messenger inositol-1,4,5,-trisphosphate (PIP). May regulate Golgi disintegration/reorganization during mitosis, possibly via its phosphorylation. Involved in Golgi-to-plasma membrane trafficking. May play an important role in the inner ear development. The polypeptide is Phosphatidylinositol 4-kinase beta (PI4KB) (Sorex araneus (Eurasian common shrew)).